The sequence spans 28 residues: uncharacterized protein (28 aa).

This is an uncharacterized protein from Spiroplasma virus 4 (SpV4).